Consider the following 85-residue polypeptide: Small ribosomal subunit protein eS21 (85 aa).

This sequence belongs to the eukaryotic ribosomal protein eS21 family. Component of the 40S small ribosomal subunit.

It is found in the cytoplasm. The protein localises to the cytosol. The protein resides in the rough endoplasmic reticulum. The polypeptide is Small ribosomal subunit protein eS21 (rps-21) (Pectinaria gouldii (Trumpet worm)).